Here is a 524-residue protein sequence, read N- to C-terminus: GMP synthase [glutamine-hydrolyzing] (524 aa).

The region spanning 5–195 is the Glutamine amidotransferase type-1 domain; the sequence is KVIVIDFGGQ…VRGVCGCAGT (191 aa). The active-site Nucleophile is the cysteine 82. Residues histidine 169 and glutamate 171 contribute to the active site. One can recognise a GMPS ATP-PPase domain in the interval 196-389; that stretch reads WKMDSFVKNT…LGLPDYLVFR (194 aa). 223 to 229 is a binding site for ATP; the sequence is SGGVDSS.

As to quaternary structure, homodimer.

The catalysed reaction is XMP + L-glutamine + ATP + H2O = GMP + L-glutamate + AMP + diphosphate + 2 H(+). The protein operates within purine metabolism; GMP biosynthesis; GMP from XMP (L-Gln route): step 1/1. Functionally, catalyzes the synthesis of GMP from XMP. The sequence is that of GMP synthase [glutamine-hydrolyzing] from Agathobacter rectalis (strain ATCC 33656 / DSM 3377 / JCM 17463 / KCTC 5835 / VPI 0990) (Eubacterium rectale).